Reading from the N-terminus, the 293-residue chain is Phycoerythrin class 2 subunit gamma, linker polypeptide (293 aa).

C49 contributes to the phycourobilin binding site. Residues 50 to 229 (AAMGIGIGPR…LGGMKVAISD (180 aa)) enclose the PBS-linker domain.

Contains one covalently linked phycourobilin chromophore.

It is found in the cellular thylakoid membrane. Its function is as follows. This protein is a bile pigment-bearing rod linker polypeptide that associates with C-phycoerythrin. This chain is Phycoerythrin class 2 subunit gamma, linker polypeptide (mpeC), found in Synechococcus sp. (strain WH8020).